Consider the following 100-residue polypeptide: Aspartyl/glutamyl-tRNA(Asn/Gln) amidotransferase subunit C (100 aa).

The protein belongs to the GatC family. As to quaternary structure, heterotrimer of A, B and C subunits.

It catalyses the reaction L-glutamyl-tRNA(Gln) + L-glutamine + ATP + H2O = L-glutaminyl-tRNA(Gln) + L-glutamate + ADP + phosphate + H(+). The catalysed reaction is L-aspartyl-tRNA(Asn) + L-glutamine + ATP + H2O = L-asparaginyl-tRNA(Asn) + L-glutamate + ADP + phosphate + 2 H(+). Functionally, allows the formation of correctly charged Asn-tRNA(Asn) or Gln-tRNA(Gln) through the transamidation of misacylated Asp-tRNA(Asn) or Glu-tRNA(Gln) in organisms which lack either or both of asparaginyl-tRNA or glutaminyl-tRNA synthetases. The reaction takes place in the presence of glutamine and ATP through an activated phospho-Asp-tRNA(Asn) or phospho-Glu-tRNA(Gln). In Streptococcus equi subsp. zooepidemicus (strain MGCS10565), this protein is Aspartyl/glutamyl-tRNA(Asn/Gln) amidotransferase subunit C.